Consider the following 486-residue polypeptide: Endoglucanase 16 (486 aa).

The N-terminal stretch at 1–30 is a signal peptide; it reads MANYKGRGNVMIRSMLLGLYGIINIVCVNG. N29 is a glycosylation site (N-linked (GlcNAc...) asparagine). The active-site Nucleophile is D87. Residues H407, D458, and E467 contribute to the active site.

It belongs to the glycosyl hydrolase 9 (cellulase E) family.

The protein localises to the secreted. It catalyses the reaction Endohydrolysis of (1-&gt;4)-beta-D-glucosidic linkages in cellulose, lichenin and cereal beta-D-glucans.. The protein is Endoglucanase 16 of Arabidopsis thaliana (Mouse-ear cress).